A 78-amino-acid polypeptide reads, in one-letter code: UPF0349 protein SAHV_0934 (78 aa).

This sequence belongs to the UPF0349 family.

This Staphylococcus aureus (strain Mu3 / ATCC 700698) protein is UPF0349 protein SAHV_0934.